The sequence spans 496 residues: MSARCIMVLGTTSGAGKSWLATALCRHYSNQGLKVAPFKAQNMSNNARVVAAPGGEGSEAGGFGAWGEIGSAQYFQALAARAVPDVRMNPLLLKPEADTHSQVVLLGQVSDALSQMPWRGRSEKVWPQIAAALDALRAENDVVVIEGAGSPAEINLHASDIVNMRVARHAQARCLLVTDIDRGGAFAHLYGTWALLPADERALIAGFVLNKFRGDEALLAPAPQMLQDKTGVPVVATIPMQWDHGLPEEDGVFDDRARASGAVHTRIAVVAYPRISNLDEFQPLKNVPGVRLSWARSPADVHGADWIILPGSKATAADLAWLRAQGLDAAIAAHAARGGRVLGVCGGLQMLGEALIDTVGVDGNGPGLGLLPLVTSFEATKTVRPTRQCFGAVQGAWRHLAGVAVQGYEIHHGQTAQHPAMAASGDVARELIPGLAWQNPGGNVLGLYLHGLFEDAAVLRALFGADAPTLDAVFEGLAAGIARHFEPGVLDALAVQ.

The 195-residue stretch at 264–458 (HTRIAVVAYP…LHGLFEDAAV (195 aa)) folds into the GATase cobBQ-type domain. The active-site Nucleophile is the Cys345. His450 is a catalytic residue.

This sequence belongs to the CobB/CobQ family. CobQ subfamily.

It participates in cofactor biosynthesis; adenosylcobalamin biosynthesis. Catalyzes amidations at positions B, D, E, and G on adenosylcobyrinic A,C-diamide. NH(2) groups are provided by glutamine, and one molecule of ATP is hydrogenolyzed for each amidation. The chain is Cobyric acid synthase from Acidovorax ebreus (strain TPSY) (Diaphorobacter sp. (strain TPSY)).